Here is a 1292-residue protein sequence, read N- to C-terminus: Myosin-1 (1292 aa).

The Myosin motor domain maps to 35–714; sequence VGVSDLTLLS…TLFALENMRD (680 aa). 128–135 contacts ATP; it reads GESGAGKT. S356 bears the Phosphoserine mark. Residues 403-485 form an actin-binding region; the sequence is SIGILDIYGF…PGIFAALNDS (83 aa). 2 consecutive IQ domains span residues 718–738 and 739–764; these read HNMA…RIDS and AIRI…YGNK. Residues 770 to 960 enclose the TH1 domain; it reads KERRAMSLLG…TIMVRRGRPG (191 aa). Disordered regions lie at residues 956-991, 1017-1180, and 1227-1258; these read RGRP…GHPT, YSLN…FPLK, and PVAS…SAAT. A compositionally biased stretch (polar residues) spans 1062–1081; the sequence is MDNSSAAYGNASALPNSAPS. Pro residues-rich tracts occupy residues 1087 to 1121 and 1142 to 1155; these read ASRP…PMPR and APPP…PPAA. Residues 1157–1219 enclose the SH3 domain; that stretch reads PSEPVYEAAF…PTAYIVESKA (63 aa). Over residues 1240–1258 the composition is skewed to low complexity; it reads ATREAGTTSAATAAASAAT.

This sequence belongs to the TRAFAC class myosin-kinesin ATPase superfamily. Myosin family. In terms of processing, phosphorylation of the TEDS site (Ser-356) is required for the polarization of the actin cytoskeleton. Phosphorylation probably activates the myosin-I ATPase activity.

The protein localises to the cytoplasm. Its subcellular location is the cytoskeleton. It localises to the actin patch. In terms of biological role, type-I myosin implicated in the organization of the actin cytoskeleton. Required for proper actin cytoskeleton polarization. At the cell cortex, assembles in patch-like structures together with proteins from the actin-polymerizing machinery and promotes actin assembly. Functions as actin nucleation-promoting factor (NPF) for the Arp2/3 complex. The chain is Myosin-1 (MYO1) from Eremothecium gossypii (strain ATCC 10895 / CBS 109.51 / FGSC 9923 / NRRL Y-1056) (Yeast).